Consider the following 223-residue polypeptide: DNA mismatch repair protein MutH (223 aa).

Belongs to the MutH family.

Its subcellular location is the cytoplasm. Functionally, sequence-specific endonuclease that cleaves unmethylated GATC sequences. It is involved in DNA mismatch repair. This chain is DNA mismatch repair protein MutH, found in Haemophilus influenzae (strain ATCC 51907 / DSM 11121 / KW20 / Rd).